A 105-amino-acid polypeptide reads, in one-letter code: Large ribosomal subunit protein uL23 (105 aa).

Belongs to the universal ribosomal protein uL23 family. In terms of assembly, part of the 50S ribosomal subunit. Contacts protein L29, and trigger factor when it is bound to the ribosome.

In terms of biological role, one of the early assembly proteins it binds 23S rRNA. One of the proteins that surrounds the polypeptide exit tunnel on the outside of the ribosome. Forms the main docking site for trigger factor binding to the ribosome. This Ureaplasma parvum serovar 3 (strain ATCC 27815 / 27 / NCTC 11736) protein is Large ribosomal subunit protein uL23.